Reading from the N-terminus, the 239-residue chain is Fatty acid metabolism regulator protein (239 aa).

The HTH gntR-type domain maps to 6-74 (KGPASFAEKY…HGKPTQVNNF (69 aa)). Positions 34–53 (ERELSELIGVTRTTLREVLQ) form a DNA-binding region, H-T-H motif.

In terms of assembly, homodimer.

It is found in the cytoplasm. In terms of biological role, multifunctional regulator of fatty acid metabolism. The protein is Fatty acid metabolism regulator protein of Shewanella denitrificans (strain OS217 / ATCC BAA-1090 / DSM 15013).